The primary structure comprises 178 residues: Large ribosomal subunit protein uL10 (178 aa).

It belongs to the universal ribosomal protein uL10 family. Part of the ribosomal stalk of the 50S ribosomal subunit. The N-terminus interacts with L11 and the large rRNA to form the base of the stalk. The C-terminus forms an elongated spine to which L12 dimers bind in a sequential fashion forming a multimeric L10(L12)X complex.

Its function is as follows. Forms part of the ribosomal stalk, playing a central role in the interaction of the ribosome with GTP-bound translation factors. The chain is Large ribosomal subunit protein uL10 from Gloeothece citriformis (strain PCC 7424) (Cyanothece sp. (strain PCC 7424)).